The sequence spans 225 residues: CRISPR pre-crRNA endoribonuclease Cas5d (225 aa).

The protein belongs to the CRISPR-associated protein Cas5 family. Subtype I-C/Dvulg subfamily. Does not require a metal cofactor. serves as cofactor.

Functionally, CRISPR (clustered regularly interspaced short palindromic repeat) is an adaptive immune system that provides protection against mobile genetic elements (viruses, transposable elements and conjugative plasmids). CRISPR clusters contain spacers, sequences complementary to antecedent mobile elements, and target invading nucleic acids. CRISPR clusters are transcribed and processed into CRISPR RNA (crRNA). This protein is a sequence-specific endonuclease that cleaves pre-crRNA at G21 into mature crRNA. Does not cleave pre-crRNA associated with the T.thermophilus strain HB27 Cas5 protein (AC Q746C2) CRISPR locus. The reaction mechanism may proceed by an intramolecular attack of the 2'-hydroxyl group of G21 on the scissile phosphodiester, cutting the precursor 3' to G21 residue yielding 5'-hydroxyl and 2' and/or 3' ends lacking a hydroxyl group (perhaps a 2'/3' cyclic phosphodiester). This is CRISPR pre-crRNA endoribonuclease Cas5d from Mannheimia succiniciproducens (strain KCTC 0769BP / MBEL55E).